The sequence spans 150 residues: MNNPSTPSARRKARRFTLQALYQWQLAGAAVSDIEAQFLANQDFAKVDREYFHDLLHGVLGQVKTLDEQLTPYLDRRVEELSQVEKAILRLGAFELKERQDVPYRVVINEGIELAKVFGAEDSFKYVNGVLDKLARQLRYAEASERRPRD.

The protein belongs to the NusB family.

Functionally, involved in transcription antitermination. Required for transcription of ribosomal RNA (rRNA) genes. Binds specifically to the boxA antiterminator sequence of the ribosomal RNA (rrn) operons. This chain is Transcription antitermination protein NusB, found in Alcanivorax borkumensis (strain ATCC 700651 / DSM 11573 / NCIMB 13689 / SK2).